Consider the following 429-residue polypeptide: Probable M18 family aminopeptidase 2 (429 aa).

3 residues coordinate Zn(2+): His-82, His-156, and His-401.

This sequence belongs to the peptidase M18 family. The cofactor is Zn(2+).

The chain is Probable M18 family aminopeptidase 2 from Pseudomonas paraeruginosa (strain DSM 24068 / PA7) (Pseudomonas aeruginosa (strain PA7)).